Consider the following 367-residue polypeptide: CST complex subunit STN1 (367 aa).

Positions 56–154 (VEILGTVIGR…EIRVTTYYKV (99 aa)) form a DNA-binding region, OB. Winged helix-turn-helix (wHTH) stretches follow at residues 190-294 (RAFS…YVTR) and 295-367 (EDKE…YTAF).

This sequence belongs to the STN1 family. In terms of assembly, component of the CST complex, composed of TEN1, CTC1 and STN1. Interacts with TEN1 and CTC1; the interaction is direct. Interacts with ACD/TPP1.

Its subcellular location is the nucleus. It is found in the chromosome. The protein localises to the telomere. In terms of biological role, component of the CST complex, a complex that binds to single-stranded DNA and is required to protect telomeres from DNA degradation. The CST complex binds single-stranded DNA with high affinity in a sequence-independent manner, while isolated subunits bind DNA with low affinity by themselves. In addition to telomere protection, the CST complex has probably a more general role in DNA metabolism at non-telomeric sites. The polypeptide is CST complex subunit STN1 (Ailuropoda melanoleuca (Giant panda)).